Reading from the N-terminus, the 76-residue chain is MGSFSIWHWLIVLVIVALVFGTKKIGSMGTDVGKAVKGFKDGMKGEDDKPAAQNAAPSQVADKGTVDVEVKEKSNS.

The helical transmembrane segment at 1–21 threads the bilayer; sequence MGSFSIWHWLIVLVIVALVFG. Basic and acidic residues-rich tracts occupy residues 39–50 and 64–76; these read FKDGMKGEDDKP and GTVD…KSNS. Residues 39–76 form a disordered region; sequence FKDGMKGEDDKPAAQNAAPSQVADKGTVDVEVKEKSNS.

This sequence belongs to the TatA/E family. In terms of assembly, the Tat system comprises two distinct complexes: a TatABC complex, containing multiple copies of TatA, TatB and TatC subunits, and a separate TatA complex, containing only TatA subunits. Substrates initially bind to the TatABC complex, which probably triggers association of the separate TatA complex to form the active translocon.

It is found in the cell inner membrane. Part of the twin-arginine translocation (Tat) system that transports large folded proteins containing a characteristic twin-arginine motif in their signal peptide across membranes. TatA could form the protein-conducting channel of the Tat system. The protein is Sec-independent protein translocase protein TatA of Herminiimonas arsenicoxydans.